The chain runs to 381 residues: Cytochrome b (381 aa).

Helical transmembrane passes span 31-51 (FGFLSSICLIVQILTGIFLAM), 75-97 (WLLRYIHTNGASMFFIVVYIHIF), 112-132 (VWVIGVLILLLMILTAFIGYV), and 178-198 (FFSLHYLMPFVIAAVSLVHLA). Positions 81 and 95 each coordinate heme b. Residues histidine 182 and histidine 196 each coordinate heme b. Residue histidine 201 coordinates a ubiquinone. A run of 4 helical transmembrane segments spans residues 224 to 244 (FIVKDFLGMVIFIIFFSIFVY), 288 to 308 (LGGVTAMISAIAILAFLPWIH), 320 to 340 (LYRLFYWVMISCCLILGWIGG), and 347 to 367 (YVIIGQIASIYYFIYFIILLP).

The protein belongs to the cytochrome b family. As to quaternary structure, the main subunits of complex b-c1 are: cytochrome b, cytochrome c1 and the Rieske protein. The cofactor is heme b.

The protein localises to the mitochondrion inner membrane. Its function is as follows. Component of the ubiquinol-cytochrome c reductase complex (complex III or cytochrome b-c1 complex) that is part of the mitochondrial respiratory chain. The b-c1 complex mediates electron transfer from ubiquinol to cytochrome c. Contributes to the generation of a proton gradient across the mitochondrial membrane that is then used for ATP synthesis. The polypeptide is Cytochrome b (MT-CYB) (Chondrus crispus (Carrageen Irish moss)).